Here is a 228-residue protein sequence, read N- to C-terminus: Thermonuclease (228 aa).

The first 23 residues, 1-23, serve as a signal peptide directing secretion; that stretch reads MTEYLLSAGICMAIVSILLIGMA. A propeptide spanning residues 24 to 60 is cleaved from the precursor; that stretch reads ISNVSKGQYAKRFFFFATSCLVLTLVVVSSLSSSANA. The span at 58–70 shows a compositional bias: polar residues; the sequence is ANASQTDNGVNRS. Residues 58 to 83 form a disordered region; the sequence is ANASQTDNGVNRSGSEDPTVYSATST. Asp100 serves as a coordination point for Ca(2+). The active site involves Arg114. Ca(2+)-binding residues include Asp119 and Thr120. Residues Glu122 and Arg166 contribute to the active site.

It belongs to the thermonuclease family. Requires Ca(2+) as cofactor.

Its subcellular location is the secreted. It catalyses the reaction Endonucleolytic cleavage to nucleoside 3'-phosphates and 3'-phosphooligonucleotide end-products.. Functionally, enzyme that catalyzes the hydrolysis of both DNA and RNA at the 5' position of the phosphodiester bond. This is Thermonuclease (nuc) from Staphylococcus aureus (strain Mu50 / ATCC 700699).